Reading from the N-terminus, the 209-residue chain is Thymidylate kinase (209 aa).

Residue G11 to T18 participates in ATP binding.

It belongs to the thymidylate kinase family.

The enzyme catalyses dTMP + ATP = dTDP + ADP. Phosphorylation of dTMP to form dTDP in both de novo and salvage pathways of dTTP synthesis. This Pasteurella multocida (strain Pm70) protein is Thymidylate kinase (tmk).